Consider the following 279-residue polypeptide: 3-methyl-2-oxobutanoate hydroxymethyltransferase (279 aa).

Mg(2+) contacts are provided by aspartate 43 and aspartate 82. 3-methyl-2-oxobutanoate-binding positions include 43–44 (DS), aspartate 82, and lysine 112. Glutamate 114 contacts Mg(2+). Glutamate 181 functions as the Proton acceptor in the catalytic mechanism.

This sequence belongs to the PanB family. In terms of assembly, homodecamer; pentamer of dimers. It depends on Mg(2+) as a cofactor.

The protein resides in the cytoplasm. The catalysed reaction is 3-methyl-2-oxobutanoate + (6R)-5,10-methylene-5,6,7,8-tetrahydrofolate + H2O = 2-dehydropantoate + (6S)-5,6,7,8-tetrahydrofolate. Its pathway is cofactor biosynthesis; (R)-pantothenate biosynthesis; (R)-pantoate from 3-methyl-2-oxobutanoate: step 1/2. In terms of biological role, catalyzes the reversible reaction in which hydroxymethyl group from 5,10-methylenetetrahydrofolate is transferred onto alpha-ketoisovalerate to form ketopantoate. In Exiguobacterium sibiricum (strain DSM 17290 / CCUG 55495 / CIP 109462 / JCM 13490 / 255-15), this protein is 3-methyl-2-oxobutanoate hydroxymethyltransferase.